We begin with the raw amino-acid sequence, 617 residues long: UvrABC system protein C (617 aa).

The GIY-YIG domain maps to 22–100 (NLPGVYRFFN…IKALSPKYNI (79 aa)). One can recognise a UVR domain in the interval 209 to 244 (DELTRTLQHKMQTAAANLQFEEAARYRDQIQALGIM).

It belongs to the UvrC family. In terms of assembly, interacts with UvrB in an incision complex.

Its subcellular location is the cytoplasm. Functionally, the UvrABC repair system catalyzes the recognition and processing of DNA lesions. UvrC both incises the 5' and 3' sides of the lesion. The N-terminal half is responsible for the 3' incision and the C-terminal half is responsible for the 5' incision. This Neisseria meningitidis serogroup B (strain ATCC BAA-335 / MC58) protein is UvrABC system protein C.